Here is a 1028-residue protein sequence, read N- to C-terminus: Receptor-type guanylate cyclase gcy-13 (1028 aa).

N-linked (GlcNAc...) asparagine glycosylation is found at Asn58, Asn156, Asn324, Asn337, Asn377, and Asn394. The helical transmembrane segment at 438–458 threads the bilayer; sequence IVVIVAVIIVLCCAAAAIAAF. The Cytoplasmic segment spans residues 459–1028; it reads LVIKARRDEE…WLLGMKEESA (570 aa). Residues 491-511 are disordered; the sequence is ESHHSSRSLQSNSTTTTGTTG. The span at 497–511 shows a compositional bias: low complexity; sequence RSLQSNSTTTTGTTG. The Protein kinase domain occupies 499–770; that stretch reads LQSNSTTTTG…DMVNKLMKNM (272 aa). Positions 786 to 817 form a coiled coil; sequence SVLEKHASSLEDEVQERMKELVEEKKKSDILL. In terms of domain architecture, Guanylate cyclase spans 844-974; the sequence is TIFFSDVVGF…DTVNTASRME (131 aa).

Belongs to the adenylyl cyclase class-4/guanylyl cyclase family. In terms of tissue distribution, expressed bilaterally in RIM interneurons.

It localises to the cell membrane. It carries out the reaction GTP = 3',5'-cyclic GMP + diphosphate. Functionally, guanylate cyclase involved in the production of the second messenger cGMP. This chain is Receptor-type guanylate cyclase gcy-13, found in Caenorhabditis elegans.